The primary structure comprises 240 residues: Transcription factor bHLH101 (240 aa).

The bHLH domain maps to Glu65–Gln117.

In terms of assembly, homodimer. Flowers.

Its subcellular location is the nucleus. The sequence is that of Transcription factor bHLH101 (BHLH101) from Arabidopsis thaliana (Mouse-ear cress).